A 387-amino-acid chain; its full sequence is Galactokinase (387 aa).

33–36 serves as a coordination point for substrate; it reads EHTD. Residues Ser67 and 124 to 130 contribute to the ATP site; that span reads GAGLSSS. Mg(2+) is bound by residues Ser130 and Glu162. The Proton acceptor role is filled by Asp174. Tyr224 serves as a coordination point for substrate.

This sequence belongs to the GHMP kinase family. GalK subfamily.

It localises to the cytoplasm. It catalyses the reaction alpha-D-galactose + ATP = alpha-D-galactose 1-phosphate + ADP + H(+). Its pathway is carbohydrate metabolism; galactose metabolism. Catalyzes the transfer of the gamma-phosphate of ATP to D-galactose to form alpha-D-galactose-1-phosphate (Gal-1-P). This Lactiplantibacillus plantarum (strain ATCC BAA-793 / NCIMB 8826 / WCFS1) (Lactobacillus plantarum) protein is Galactokinase.